The chain runs to 199 residues: Large ribosomal subunit protein bL25 (199 aa).

This sequence belongs to the bacterial ribosomal protein bL25 family. CTC subfamily. In terms of assembly, part of the 50S ribosomal subunit; part of the 5S rRNA/L5/L18/L25 subcomplex. Contacts the 5S rRNA. Binds to the 5S rRNA independently of L5 and L18.

Functionally, this is one of the proteins that binds to the 5S RNA in the ribosome where it forms part of the central protuberance. The polypeptide is Large ribosomal subunit protein bL25 (Nostoc punctiforme (strain ATCC 29133 / PCC 73102)).